The primary structure comprises 88 residues: Translation initiation factor IF-1 1 (88 aa).

The S1-like domain maps to 1 to 72 (MAKEELIELD…TKGRINFRHK (72 aa)).

It belongs to the IF-1 family. In terms of assembly, component of the 30S ribosomal translation pre-initiation complex which assembles on the 30S ribosome in the order IF-2 and IF-3, IF-1 and N-formylmethionyl-tRNA(fMet); mRNA recruitment can occur at any time during PIC assembly.

Its subcellular location is the cytoplasm. Functionally, one of the essential components for the initiation of protein synthesis. Stabilizes the binding of IF-2 and IF-3 on the 30S subunit to which N-formylmethionyl-tRNA(fMet) subsequently binds. Helps modulate mRNA selection, yielding the 30S pre-initiation complex (PIC). Upon addition of the 50S ribosomal subunit IF-1, IF-2 and IF-3 are released leaving the mature 70S translation initiation complex. The chain is Translation initiation factor IF-1 1 from Burkholderia mallei (strain ATCC 23344).